Reading from the N-terminus, the 105-residue chain is Large ribosomal subunit protein eL36 (105 aa).

Lys-62 bears the N6-acetyllysine mark.

It belongs to the eukaryotic ribosomal protein eL36 family. Component of the large ribosomal subunit.

It is found in the cytoplasm. Its subcellular location is the cytosol. In terms of biological role, component of the large ribosomal subunit. The ribosome is a large ribonucleoprotein complex responsible for the synthesis of proteins in the cell. This is Large ribosomal subunit protein eL36 (RPL36) from Homo sapiens (Human).